The sequence spans 284 residues: Tetraspanin-10 (284 aa).

Residues methionine 1–arginine 11 are Cytoplasmic-facing. The chain crosses the membrane as a helical span at residues tryptophan 12–serine 32. Residues threonine 33–threonine 43 lie on the Extracellular side of the membrane. A helical membrane pass occupies residues phenylalanine 44–alanine 64. At cysteine 65 to tyrosine 75 the chain is on the cytoplasmic side. The chain crosses the membrane as a helical span at residues leucine 76–valine 96. Over threonine 97 to glutamate 228 the chain is Extracellular. N-linked (GlcNAc...) asparagine glycosylation is found at asparagine 99, asparagine 128, and asparagine 183. Residues tryptophan 229–serine 249 traverse the membrane as a helical segment. Topologically, residues threonine 250–phenylalanine 284 are cytoplasmic.

It belongs to the tetraspanin (TM4SF) family.

The protein resides in the membrane. May be involved in the regulation of cell differentiation. The sequence is that of Tetraspanin-10 (TET10) from Arabidopsis thaliana (Mouse-ear cress).